The primary structure comprises 531 residues: MAAIKAINSKAEVARAQAALAVNICAARGLQDVLRTNLGPKGTMKMLVSGAGDVKLTKDGNVLLHEMQIQHPTASLIAKVATAQDDITGDGTTSNVLIIGELLKQADLYISEGLHPRIIAEGFEIAKIKALEVLEQVKIKKEMKREIHLDVARTSLQTKVHPQLADVLTEAVVDSVLAIRRPNYPIDLFMVEIMEMKHKSETDTKLIKGLVLDHGARHPDMKKRVDDAFILTCNVSLEYEKTEVSSGFFYKTAEEKEKLVKAERKFIEDRVQKIIDLKDKVCAQSNKGFVVINQKGIDPFSLDALAKHGILALRRAKRRNMERLSLACGGVAVNSVEDLSVDCLGHAGLVYEYTLGEEKYTFIEDCINPRSVTLLVKGPNKHTLTQIKDAVRDGLRAIKNAIEDGCVVPGAGAVEVVIAEALVTYKHTIQGRARLGVQAFADALLIIPKVLAQNSGYDLQETLVKVQAEHSNSKQPVGIDLNTGEPMVAADAGVWDNYCVKKQLLHSCTVIATNILLVDEIMRAGMSSLKG.

Belongs to the TCP-1 chaperonin family. In terms of assembly, component of the chaperonin-containing T-complex (TRiC), a heterooligomeric complex of about 850 to 900 kDa that forms two stacked rings, 12 to 16 nm in diameter.

It localises to the cytoplasm. Its function is as follows. Component of the chaperonin-containing T-complex (TRiC), a molecular chaperone complex that assists the folding of proteins upon ATP hydrolysis. The polypeptide is T-complex protein 1 subunit zeta-2 (CCT6B) (Bos taurus (Bovine)).